The chain runs to 205 residues: Large ribosomal subunit protein bL17c (205 aa).

A chloroplast-targeting transit peptide spans 1-89; that stretch reads MASASTTWSM…VIDNGGRVFA (89 aa).

It belongs to the bacterial ribosomal protein bL17 family. As to quaternary structure, part of the 50S ribosomal subunit.

The protein resides in the plastid. It is found in the chloroplast. Functionally, this protein binds directly to 23S ribosomal RNA. The sequence is that of Large ribosomal subunit protein bL17c (RPL17) from Nicotiana tabacum (Common tobacco).